Here is a 227-residue protein sequence, read N- to C-terminus: Phosphoglycolate phosphatase (227 aa).

D11 functions as the Nucleophile in the catalytic mechanism. Mg(2+) is bound by residues D11 and D13. K155 contacts substrate. Mg(2+) is bound by residues D178 and D182.

It belongs to the archaeal SPP-like hydrolase family. It depends on Mg(2+) as a cofactor.

It carries out the reaction 2-phosphoglycolate + H2O = glycolate + phosphate. Catalyzes the dephosphorylation of 2-phosphoglycolate. In Haloarcula marismortui (strain ATCC 43049 / DSM 3752 / JCM 8966 / VKM B-1809) (Halobacterium marismortui), this protein is Phosphoglycolate phosphatase.